Reading from the N-terminus, the 93-residue chain is Translation initiation factor IF-1 (93 aa).

The S1-like domain maps to Met-1–Lys-72. Residues Arg-70–Arg-93 form a disordered region.

Belongs to the IF-1 family. Component of the 30S ribosomal translation pre-initiation complex which assembles on the 30S ribosome in the order IF-2 and IF-3, IF-1 and N-formylmethionyl-tRNA(fMet); mRNA recruitment can occur at any time during PIC assembly.

It localises to the cytoplasm. Its function is as follows. One of the essential components for the initiation of protein synthesis. Stabilizes the binding of IF-2 and IF-3 on the 30S subunit to which N-formylmethionyl-tRNA(fMet) subsequently binds. Helps modulate mRNA selection, yielding the 30S pre-initiation complex (PIC). Upon addition of the 50S ribosomal subunit IF-1, IF-2 and IF-3 are released leaving the mature 70S translation initiation complex. The chain is Translation initiation factor IF-1 from Nitrobacter winogradskyi (strain ATCC 25391 / DSM 10237 / CIP 104748 / NCIMB 11846 / Nb-255).